Here is a 705-residue protein sequence, read N- to C-terminus: Elongation factor G (705 aa).

One can recognise a tr-type G domain in the interval 8–290 (ERYRNFGIMA…GVVHLLPSPA (283 aa)). GTP-binding positions include 17–24 (AHIDAGKT), 88–92 (DTPGH), and 142–145 (NKMD). Residues 290–309 (ADRPPVQGIDEDEKEDTRAA) form a disordered region.

This sequence belongs to the TRAFAC class translation factor GTPase superfamily. Classic translation factor GTPase family. EF-G/EF-2 subfamily.

The protein resides in the cytoplasm. Catalyzes the GTP-dependent ribosomal translocation step during translation elongation. During this step, the ribosome changes from the pre-translocational (PRE) to the post-translocational (POST) state as the newly formed A-site-bound peptidyl-tRNA and P-site-bound deacylated tRNA move to the P and E sites, respectively. Catalyzes the coordinated movement of the two tRNA molecules, the mRNA and conformational changes in the ribosome. This is Elongation factor G from Xanthomonas oryzae pv. oryzae (strain MAFF 311018).